The primary structure comprises 340 residues: Acidic endochitinase WIN6 (340 aa).

A signal peptide spans 1–22 (MSVWALFAFFSLFLSLSVRGSA). In terms of domain architecture, Chitin-binding type-1 spans 23-63 (EQCGRQAGDALCPGGLCCSSYGWCGTTVDYCGIGCQSQCDG). 4 disulfide bridges follow: C25/C40, C34/C46, C39/C53, and C57/C61. The segment at 64–85 (GGGGDGGDDGCDGGDDGGGDGD) is spacer. The chitinase stretch occupies residues 86–340 (DGYLSDIIPK…YGLSGLKDTM (255 aa)). Cystine bridges form between C110–C172, C183–C191, and C290–C323. E154 (proton donor) is an active-site residue.

It belongs to the glycosyl hydrolase 19 family. Chitinase class I subfamily.

The catalysed reaction is Random endo-hydrolysis of N-acetyl-beta-D-glucosaminide (1-&gt;4)-beta-linkages in chitin and chitodextrins.. Defense against chitin-containing fungal pathogens. The polypeptide is Acidic endochitinase WIN6 (WIN6) (Populus trichocarpa (Western balsam poplar)).